The chain runs to 530 residues: MRELFMYLFLLFLVLCVKSVYSTPTREQFQNCLSTKQFNSTLKNPINLTTHTLDSRVHTDFSESSSPNSSFLNLNFTSLKPILIVKPKSESEIKQSILCSRKLGVQVRTMSGGHDYEGLSYLSLSPFIIVDLVNLRSISINLTDETAWIQSGATLGEVYYKIAKTSKIHAFAAGICPSVGVGGHISGGGFGTIMRKYGLASDNVVDARLMDVNGKTLDRKTMGEDLFWALRGGGAASFGVVLSWKVKLARVPEKVTCFISQHPMGPSMNKLVHRWQSIGSELDEDLFIRVIIDNSLEGNQRKVKSTFQTLFLGGIDRLIPLMNQKFPELGLRSQDCSEMSWIESIMFFNWRSGQPLEILLNRDLRFEDQYFKAKSDYVQKPVPENVFEEVTKRFLEQDTPLMIFEPLGGKISKISETESPYPHRRGNLYNIQYMVKWKVNEVEEMNKHVRWMRSLHDYMTPYVSKSPRGAYLNYRDLDLGSTKGINTSFEDARKWGETYFKGNFKRLGLVKGKIDPTNFFRNEQSIPPLF.

Positions 1 to 22 (MRELFMYLFLLFLVLCVKSVYS) are cleaved as a signal peptide. Cysteines 32 and 99 form a disulfide. N-linked (GlcNAc...) asparagine glycosylation is found at Asn39, Asn47, Asn68, Asn75, Asn141, and Asn486. The 175-residue stretch at 77–251 (TSLKPILIVK…LSWKVKLARV (175 aa)) folds into the FAD-binding PCMH-type domain. Positions 114 to 176 (HDYEGLSYLS…KIHAFAAGIC (63 aa)) form a cross-link, 6-(S-cysteinyl)-8alpha-(pros-histidyl)-FAD (His-Cys).

The protein belongs to the oxygen-dependent FAD-linked oxidoreductase family. It depends on FAD as a cofactor. The FAD cofactor is bound via a bicovalent 6-S-cysteinyl, 8alpha-N1-histidyl FAD linkage. As to expression, accumulates in cell walls of etiolated hypocotyls.

The protein resides in the secreted. It is found in the cell wall. This chain is Berberine bridge enzyme-like 22, found in Arabidopsis thaliana (Mouse-ear cress).